The sequence spans 305 residues: Putative lipid kinase SAB0675c (305 aa).

The 137-residue stretch at 3 to 139 (NKYTHGVLFY…YDVIKINNQY (137 aa)) folds into the DAGKc domain. ATP-binding positions include Ser44, 74 to 80 (GDGTVNE), and Thr101. Residues Ser220, Asp223, and Glu225 each contribute to the Mg(2+) site. Glu281 functions as the Proton acceptor in the catalytic mechanism.

Belongs to the diacylglycerol/lipid kinase family. It depends on Mg(2+) as a cofactor.

Functionally, may catalyze the ATP-dependent phosphorylation of lipids other than diacylglycerol (DAG). The protein is Putative lipid kinase SAB0675c of Staphylococcus aureus (strain bovine RF122 / ET3-1).